The following is a 297-amino-acid chain: Transmembrane protein 178A (297 aa).

An N-terminal signal peptide occupies residues 1 to 25; it reads MEPRALVTALSLGLSLCSLGLLVTA. Residues 26–179 are Extracellular-facing; it reads IFTDHWYETD…LLHLRRITAG (154 aa). The span at 41–57 shows a compositional bias: basic and acidic residues; it reads ESCERSRAGADPPDQKN. The tract at residues 41-86 is disordered; the sequence is ESCERSRAGADPPDQKNRLMPLSHLPLRDSPPLGRRLLPGGPGRSD. Residues 68–79 are compositionally biased toward low complexity; sequence RDSPPLGRRLLP. Residue Asn-158 is glycosylated (N-linked (GlcNAc...) asparagine). A helical membrane pass occupies residues 180–200; it reads FLGMAVAVLLCGCIVATVSFF. Residues 201–208 are Cytoplasmic-facing; that stretch reads WEESLTQH. A helical transmembrane segment spans residues 209–229; sequence VAGLLFLMTGIFCTISLCTYA. Residues 230–257 lie on the Extracellular side of the membrane; the sequence is ASVSYDLNRVPKLIYSLPHDVEHGYSWS. The chain crosses the membrane as a helical span at residues 258–278; sequence IFCAWCSLGFIVAAGGLCIAY. Residues 279-297 are Cytoplasmic-facing; the sequence is PFISRTKIAHLKSGRDSTV.

The protein belongs to the TMEM178 family. Interacts with STIM1. In terms of tissue distribution, highly expressed in the bone and its expression increases during osteoclastogenesis.

Its subcellular location is the endoplasmic reticulum membrane. Its function is as follows. Acts as a negative regulator of osteoclast differentiation in basal and inflammatory conditions by regulating TNFSF11-induced Ca (2+) fluxes, thereby controlling the induction of NFATC1. This is Transmembrane protein 178A (Tmem178a) from Mus musculus (Mouse).